The following is a 332-amino-acid chain: 2,3-diketo-L-gulonate reductase (332 aa).

His-44 serves as the catalytic Proton donor. NAD(+) contacts are provided by residues 168–174 (ITMVDMS), 224–225 (WK), and 304–306 (GHE).

Belongs to the LDH2/MDH2 oxidoreductase family. DlgD subfamily. In terms of assembly, homodimer.

The protein resides in the cytoplasm. The catalysed reaction is 3-dehydro-L-gulonate + NAD(+) = 2,3-dioxo-L-gulonate + NADH + H(+). It catalyses the reaction 3-dehydro-L-gulonate + NADP(+) = 2,3-dioxo-L-gulonate + NADPH + H(+). Catalyzes the reduction of 2,3-diketo-L-gulonate in the presence of NADH, to form 3-keto-L-gulonate. This Escherichia coli O81 (strain ED1a) protein is 2,3-diketo-L-gulonate reductase.